The chain runs to 89 residues: Small ribosomal subunit protein bS20 (89 aa).

This sequence belongs to the bacterial ribosomal protein bS20 family.

In terms of biological role, binds directly to 16S ribosomal RNA. The polypeptide is Small ribosomal subunit protein bS20 (Helicobacter pylori (strain P12)).